The chain runs to 335 residues: Proline racemase (335 aa).

Catalysis depends on Cys91, which acts as the Proton acceptor. Cys256 (proton donor) is an active-site residue.

This sequence belongs to the proline racemase family.

The enzyme catalyses L-proline = D-proline. Its activity is regulated as follows. Inhibited by pyrrole-2-carboxylate in vitro. Catalyzes the reversible interconversion of L- and D-proline. Likely functions as the proline racemase necessary for D-proline generation in order to discriminate it from the L-proline used for protein synthesis. This Acetoanaerobium sticklandii (strain ATCC 12662 / DSM 519 / JCM 1433 / CCUG 9281 / NCIMB 10654 / HF) (Clostridium sticklandii) protein is Proline racemase.